Consider the following 280-residue polypeptide: Probable endonuclease lcl3 (280 aa).

The chain crosses the membrane as a helical span at residues 50-67 (TLIPTLILTTAILSAARF). The TNase-like domain maps to 89–257 (RSIYGKVTSV…KLKGNGMWKG (169 aa)). Residue R140 is part of the active site. Residue D145 participates in Ca(2+) binding. Catalysis depends on residues E148 and R188.

The protein belongs to the LCL3 family.

The protein resides in the mitochondrion. It localises to the membrane. The chain is Probable endonuclease lcl3 (lcl3) from Emericella nidulans (strain FGSC A4 / ATCC 38163 / CBS 112.46 / NRRL 194 / M139) (Aspergillus nidulans).